A 407-amino-acid chain; its full sequence is Phosphoglycerate kinase (407 aa).

Substrate-binding positions include 27–29 (DLN), R43, 66–69 (HLGR), R125, and R165. Residues K215, G303, E334, and 363–366 (GGDS) contribute to the ATP site.

Belongs to the phosphoglycerate kinase family. As to quaternary structure, monomer.

Its subcellular location is the cytoplasm. It carries out the reaction (2R)-3-phosphoglycerate + ATP = (2R)-3-phospho-glyceroyl phosphate + ADP. The protein operates within carbohydrate degradation; glycolysis; pyruvate from D-glyceraldehyde 3-phosphate: step 2/5. The protein is Phosphoglycerate kinase of Mycobacterium sp. (strain JLS).